Here is a 366-residue protein sequence, read N- to C-terminus: Tyrosine--tRNA ligase (366 aa).

5 residues coordinate L-tyrosine: Tyr41, Tyr167, Gln171, Asp174, and Gln189. The short motif at 241-245 is the 'KMSKS' region element; the sequence is KMSKS. Lys244 is a binding site for ATP.

The protein belongs to the class-I aminoacyl-tRNA synthetase family. TyrS type 4 subfamily. Homodimer.

It localises to the cytoplasm. The enzyme catalyses tRNA(Tyr) + L-tyrosine + ATP = L-tyrosyl-tRNA(Tyr) + AMP + diphosphate + H(+). In terms of biological role, catalyzes the attachment of tyrosine to tRNA(Tyr) in a two-step reaction: tyrosine is first activated by ATP to form Tyr-AMP and then transferred to the acceptor end of tRNA(Tyr). The polypeptide is Tyrosine--tRNA ligase (Saccharolobus solfataricus (strain ATCC 35092 / DSM 1617 / JCM 11322 / P2) (Sulfolobus solfataricus)).